The sequence spans 294 residues: 2-methoxy-6-polyprenyl-1,4-benzoquinol methylase, mitochondrial (294 aa).

The transit peptide at Met1 to Leu10 directs the protein to the mitochondrion. S-adenosyl-L-methionine-binding positions include Thr100, Asp136, and Asp166–Ala167.

The protein belongs to the class I-like SAM-binding methyltransferase superfamily. MenG/UbiE family. In terms of assembly, component of a multi-subunit COQ enzyme complex.

It localises to the mitochondrion inner membrane. It carries out the reaction a 2-methoxy-6-(all-trans-polyprenyl)benzene-1,4-diol + S-adenosyl-L-methionine = a 5-methoxy-2-methyl-3-(all-trans-polyprenyl)benzene-1,4-diol + S-adenosyl-L-homocysteine + H(+). It functions in the pathway cofactor biosynthesis; ubiquinone biosynthesis. Its function is as follows. Methyltransferase required for the conversion of 2-polyprenyl-6-methoxy-1,4-benzoquinol (DDMQH2) to 2-polyprenyl-3-methyl-6-methoxy-1,4-benzoquinol (DMQH2). This chain is 2-methoxy-6-polyprenyl-1,4-benzoquinol methylase, mitochondrial, found in Oryza sativa subsp. japonica (Rice).